We begin with the raw amino-acid sequence, 181 residues long: NAD(P)H-quinone oxidoreductase subunit I, chloroplastic (181 aa).

4Fe-4S ferredoxin-type domains follow at residues 52 to 81 and 92 to 121; these read GRIH…VDWE and KSYS…MTEE. 8 residues coordinate [4Fe-4S] cluster: cysteine 61, cysteine 64, cysteine 67, cysteine 71, cysteine 101, cysteine 104, cysteine 107, and cysteine 111.

The protein belongs to the complex I 23 kDa subunit family. As to quaternary structure, NDH is composed of at least 16 different subunits, 5 of which are encoded in the nucleus. It depends on [4Fe-4S] cluster as a cofactor.

The protein resides in the plastid. Its subcellular location is the chloroplast thylakoid membrane. The catalysed reaction is a plastoquinone + NADH + (n+1) H(+)(in) = a plastoquinol + NAD(+) + n H(+)(out). It carries out the reaction a plastoquinone + NADPH + (n+1) H(+)(in) = a plastoquinol + NADP(+) + n H(+)(out). Functionally, NDH shuttles electrons from NAD(P)H:plastoquinone, via FMN and iron-sulfur (Fe-S) centers, to quinones in the photosynthetic chain and possibly in a chloroplast respiratory chain. The immediate electron acceptor for the enzyme in this species is believed to be plastoquinone. Couples the redox reaction to proton translocation, and thus conserves the redox energy in a proton gradient. This is NAD(P)H-quinone oxidoreductase subunit I, chloroplastic from Zygnema circumcarinatum (Green alga).